The following is a 389-amino-acid chain: Leucine aminopeptidase 1 (389 aa).

Residues 1 to 18 form the signal peptide; sequence MKSSVLLSLCTAALVAGA. Residues 19-89 constitute a propeptide that is removed on maturation; the sequence is AHPLEPQVVL…INANRLIEKS (71 aa). N-linked (GlcNAc...) asparagine glycans are attached at residues asparagine 99, asparagine 156, and asparagine 180. 4 residues coordinate Zn(2+): histidine 188, aspartate 207, glutamate 246, and aspartate 273. A disulfide bridge connects residues cysteine 322 and cysteine 326. Histidine 355 is a binding site for Zn(2+).

Belongs to the peptidase M28 family. M28E subfamily. As to quaternary structure, monomer. It depends on Zn(2+) as a cofactor.

The protein localises to the secreted. Extracellular aminopeptidase that allows assimilation of proteinaceous substrates. The chain is Leucine aminopeptidase 1 (LAP1) from Phaeosphaeria nodorum (strain SN15 / ATCC MYA-4574 / FGSC 10173) (Glume blotch fungus).